The sequence spans 149 residues: Cytochrome c-type biogenesis protein CcmE (149 aa).

The Cytoplasmic portion of the chain corresponds to 1-7 (MKPRHKK). The helical; Signal-anchor for type II membrane protein transmembrane segment at 8 to 28 (MAVIALSVSALTVAVVLVLNA) threads the bilayer. Over 29–149 (FQSNLVFFFS…AKAQKTSLAQ (121 aa)) the chain is Periplasmic. Heme is bound by residues His-123 and Tyr-127.

Belongs to the CcmE/CycJ family.

The protein resides in the cell inner membrane. Heme chaperone required for the biogenesis of c-type cytochromes. Transiently binds heme delivered by CcmC and transfers the heme to apo-cytochromes in a process facilitated by CcmF and CcmH. The polypeptide is Cytochrome c-type biogenesis protein CcmE (Nitrosomonas europaea (strain ATCC 19718 / CIP 103999 / KCTC 2705 / NBRC 14298)).